The following is a 197-amino-acid chain: Tyrosine-protein phosphatase-like protein OCA2 (197 aa).

A Tyrosine-protein phosphatase domain is found at 10–160; it reads SPVVSTDVSL…FETNLKIPRN (151 aa). Phosphoserine is present on Ser181.

The protein belongs to the protein-tyrosine phosphatase family.

The protein resides in the cytoplasm. Required for normal growth in the presence of linoleic acid hydroperoxide (LoaOOH). In Saccharomyces cerevisiae (strain ATCC 204508 / S288c) (Baker's yeast), this protein is Tyrosine-protein phosphatase-like protein OCA2 (OCA2).